The sequence spans 146 residues: Hemoglobin subunit beta (146 aa).

At Val-1 the chain carries N-acetylvaline. Residues 2-146 (HLTAEEKSAV…VANALAHKYH (145 aa)) enclose the Globin domain. Thr-12 carries the post-translational modification Phosphothreonine. Ser-44 is modified (phosphoserine). Lys-59 carries the post-translational modification N6-acetyllysine. His-63 provides a ligand contact to heme b. Lys-82 is modified (N6-acetyllysine). Residue His-92 coordinates heme b. Residue Cys-93 is modified to S-nitrosocysteine. Lys-144 bears the N6-acetyllysine mark.

The protein belongs to the globin family. As to quaternary structure, heterotetramer of two alpha chains and two beta chains. Red blood cells.

Its function is as follows. Involved in oxygen transport from the lung to the various peripheral tissues. The protein is Hemoglobin subunit beta (HBB) of Leptonychotes weddellii (Weddell seal).